The primary structure comprises 305 residues: Putative HTH-type transcriptional regulatory protein Saci_1344 (305 aa).

The 56-residue stretch at 128-183 (LREKREEKNMSLGELSQRLGVSRISVYDYEKEDSYVSIEVAEKLIEIFGDEVIGDI) folds into the HTH cro/C1-type domain. The segment at residues 139–158 (LGELSQRLGVSRISVYDYEK) is a DNA-binding region (H-T-H motif).

The polypeptide is Putative HTH-type transcriptional regulatory protein Saci_1344 (Sulfolobus acidocaldarius (strain ATCC 33909 / DSM 639 / JCM 8929 / NBRC 15157 / NCIMB 11770)).